A 469-amino-acid polypeptide reads, in one-letter code: MFDDIPVSVGPMNEGERVRGPDMYVELAGPKSYGFELVKVVNKAEDKVEIIGKDIDEMEEGSRNPFAIIVEVSGSNLEEDLEGVLERRIHEFLNYIEGVMHLNQRDQVWIRINKDSFNKGLRLKHIGKVVQRLFKAEFPFIEKCDVTIITDPEKVKEELEKAREIYNKRDEKTKALHEEDVDVFYGCVMCQSFAPTHVCVITPDRPALCGGINYLDARAAAKIDPNGPIFEIPKGECLDEKLGIYSGVNEVVRERSQGTVEEVTLHSALEKPCTSCGCFEAIVFYIPEVDGFGIAHRGYKGETPMGIPFSTLAGQCSGGKQVPGFVGISISYMKSPKFLQGDGGWERVVWLPKELKERVKDAIPEELYDKIATEEDVKTTDELIKFLKEKGHPCAERIGAEVEEEAIEEEEVEEEMEEVEGIEVPTMTLPGTFAGLPPGIKIVLYNAVIKAEKIIITKEEPEKKKKKKK.

Residues Cys-187, Cys-190, Cys-276, and Cys-278 each contribute to the [Ni-Fe-S] cluster site.

It belongs to the CdhC family. In terms of assembly, monomer. The ACDS complex is made up of alpha, epsilon, beta, gamma and delta chains with a probable stoichiometry of (alpha(2)epsilon(2))(4)-beta(8)-(gamma(1)delta(1))(8) (Potential). Requires [Ni-Fe-S] cluster as cofactor.

The catalysed reaction is Co(I)-[corrinoid Fe-S protein] + acetyl-CoA + H(+) = methyl-Co(III)-[corrinoid Fe-S protein] + CO + CoA. Part of a complex that catalyzes the reversible cleavage of acetyl-CoA, allowing autotrophic growth from CO(2). The alpha-epsilon complex generates CO from CO(2), while the beta subunit (this protein) combines the CO with CoA and a methyl group to form acetyl-CoA. The methyl group, which is incorporated into acetyl-CoA, is transferred to the beta subunit by a corrinoid iron-sulfur protein (the gamma-delta complex). The polypeptide is Acetyl-CoA decarbonylase/synthase complex subunit beta 2 (cdhC2) (Methanocaldococcus jannaschii (strain ATCC 43067 / DSM 2661 / JAL-1 / JCM 10045 / NBRC 100440) (Methanococcus jannaschii)).